The primary structure comprises 346 residues: Holliday junction branch migration complex subunit RuvB (346 aa).

Positions 1 to 182 (MKIELLNTPA…FGISSRFDYY (182 aa)) are large ATPase domain (RuvB-L). ATP contacts are provided by residues Ile-21, Arg-22, Gly-63, Lys-66, Thr-67, Thr-68, 129 to 131 (EDF), Arg-172, Tyr-182, and Arg-219. Thr-67 is a binding site for Mg(2+). The small ATPAse domain (RuvB-S) stretch occupies residues 183–253 (PPELLERIIL…IAMTTLASLE (71 aa)). The head domain (RuvB-H) stretch occupies residues 256 to 346 (EEGLDDMDKK…GPLFDAAPAR (91 aa)). 2 residues coordinate DNA: Arg-311 and Arg-316.

This sequence belongs to the RuvB family. In terms of assembly, homohexamer. Forms an RuvA(8)-RuvB(12)-Holliday junction (HJ) complex. HJ DNA is sandwiched between 2 RuvA tetramers; dsDNA enters through RuvA and exits via RuvB. An RuvB hexamer assembles on each DNA strand where it exits the tetramer. Each RuvB hexamer is contacted by two RuvA subunits (via domain III) on 2 adjacent RuvB subunits; this complex drives branch migration. In the full resolvosome a probable DNA-RuvA(4)-RuvB(12)-RuvC(2) complex forms which resolves the HJ.

Its subcellular location is the cytoplasm. The enzyme catalyses ATP + H2O = ADP + phosphate + H(+). In terms of biological role, the RuvA-RuvB-RuvC complex processes Holliday junction (HJ) DNA during genetic recombination and DNA repair, while the RuvA-RuvB complex plays an important role in the rescue of blocked DNA replication forks via replication fork reversal (RFR). RuvA specifically binds to HJ cruciform DNA, conferring on it an open structure. The RuvB hexamer acts as an ATP-dependent pump, pulling dsDNA into and through the RuvAB complex. RuvB forms 2 homohexamers on either side of HJ DNA bound by 1 or 2 RuvA tetramers; 4 subunits per hexamer contact DNA at a time. Coordinated motions by a converter formed by DNA-disengaged RuvB subunits stimulates ATP hydrolysis and nucleotide exchange. Immobilization of the converter enables RuvB to convert the ATP-contained energy into a lever motion, pulling 2 nucleotides of DNA out of the RuvA tetramer per ATP hydrolyzed, thus driving DNA branch migration. The RuvB motors rotate together with the DNA substrate, which together with the progressing nucleotide cycle form the mechanistic basis for DNA recombination by continuous HJ branch migration. Branch migration allows RuvC to scan DNA until it finds its consensus sequence, where it cleaves and resolves cruciform DNA. The chain is Holliday junction branch migration complex subunit RuvB from Chlorobium phaeobacteroides (strain DSM 266 / SMG 266 / 2430).